We begin with the raw amino-acid sequence, 93 residues long: Small ribosomal subunit protein uS19 (93 aa).

The protein belongs to the universal ribosomal protein uS19 family.

Protein S19 forms a complex with S13 that binds strongly to the 16S ribosomal RNA. The polypeptide is Small ribosomal subunit protein uS19 (rpsS) (Thermus thermophilus (strain ATCC BAA-163 / DSM 7039 / HB27)).